Reading from the N-terminus, the 340-residue chain is Phenylalanine--tRNA ligase alpha subunit (340 aa).

Position 254 (Glu254) interacts with Mg(2+).

It belongs to the class-II aminoacyl-tRNA synthetase family. Phe-tRNA synthetase alpha subunit type 1 subfamily. In terms of assembly, tetramer of two alpha and two beta subunits. It depends on Mg(2+) as a cofactor.

The protein localises to the cytoplasm. It catalyses the reaction tRNA(Phe) + L-phenylalanine + ATP = L-phenylalanyl-tRNA(Phe) + AMP + diphosphate + H(+). This is Phenylalanine--tRNA ligase alpha subunit from Caldicellulosiruptor saccharolyticus (strain ATCC 43494 / DSM 8903 / Tp8T 6331).